The chain runs to 475 residues: Polyphosphate:AMP phosphotransferase (475 aa).

PPK2 regions lie at residues 18-222 (LDLI…LTAL) and 256-472 (ANYK…KADR).

The protein belongs to the polyphosphate kinase 2 (PPK2) family. Class II subfamily. In terms of assembly, homodimer and homotetramer. The cofactor is Mg(2+).

The catalysed reaction is [phosphate](n) + ADP = [phosphate](n+1) + AMP. Uses inorganic polyphosphate (polyP) as a donor to convert AMP to ADP. Can also use GMP, UMP, CMP, TMP or deoxyribonucleoside monophosphates, with lower efficiency. Cannot use low-molecular weight polyP as donors. Can also catalyze the synthesis of polyP from ADP or GDP, with lower efficiency. This Acinetobacter johnsonii protein is Polyphosphate:AMP phosphotransferase.